Here is an 80-residue protein sequence, read N- to C-terminus: Putative UPF0377 protein YMR324C (80 aa).

The helical transmembrane segment at 13–33 (ACIFIDSVCEGIVFWGLCLFV) threads the bilayer.

It belongs to the UPF0377 family.

It localises to the membrane. In Saccharomyces cerevisiae (strain ATCC 204508 / S288c) (Baker's yeast), this protein is Putative UPF0377 protein YMR324C.